We begin with the raw amino-acid sequence, 446 residues long: Eukaryotic translation initiation factor 3 subunit E (446 aa).

The PCI domain maps to 240-420 (PLFNDENSRE…GTVVMNHPNS (181 aa)).

Belongs to the eIF-3 subunit E family. In terms of assembly, component of the eukaryotic translation initiation factor 3 (eIF-3) complex.

The protein resides in the cytoplasm. In terms of biological role, component of the eukaryotic translation initiation factor 3 (eIF-3) complex, which is involved in protein synthesis of a specialized repertoire of mRNAs and, together with other initiation factors, stimulates binding of mRNA and methionyl-tRNAi to the 40S ribosome. The eIF-3 complex specifically targets and initiates translation of a subset of mRNAs involved in cell proliferation. In Pyricularia oryzae (strain 70-15 / ATCC MYA-4617 / FGSC 8958) (Rice blast fungus), this protein is Eukaryotic translation initiation factor 3 subunit E.